The sequence spans 95 residues: Small ribosomal subunit protein bS21 (95 aa).

The interval 56-95 (KLARKKMQREGLLPMKPKPVFGAGPGAGRGGPAAGPRGPR) is disordered. The segment covering 78–88 (AGPGAGRGGPA) has biased composition (gly residues).

The protein belongs to the bacterial ribosomal protein bS21 family.

This is Small ribosomal subunit protein bS21 from Nitrobacter winogradskyi (strain ATCC 25391 / DSM 10237 / CIP 104748 / NCIMB 11846 / Nb-255).